We begin with the raw amino-acid sequence, 543 residues long: Light-independent protochlorophyllide reductase subunit B (543 aa).

Asp-36 contributes to the [4Fe-4S] cluster binding site. Residue Asp-287 is the Proton donor of the active site. 422–423 (GL) provides a ligand contact to substrate.

Belongs to the ChlB/BchB/BchZ family. Protochlorophyllide reductase is composed of three subunits; BchL, BchN and BchB. Forms a heterotetramer of two BchB and two BchN subunits. [4Fe-4S] cluster is required as a cofactor.

It catalyses the reaction chlorophyllide a + oxidized 2[4Fe-4S]-[ferredoxin] + 2 ADP + 2 phosphate = protochlorophyllide a + reduced 2[4Fe-4S]-[ferredoxin] + 2 ATP + 2 H2O. The protein operates within porphyrin-containing compound metabolism; bacteriochlorophyll biosynthesis (light-independent). Functionally, component of the dark-operative protochlorophyllide reductase (DPOR) that uses Mg-ATP and reduced ferredoxin to reduce ring D of protochlorophyllide (Pchlide) to form chlorophyllide a (Chlide). This reaction is light-independent. The NB-protein (BchN-BchB) is the catalytic component of the complex. The polypeptide is Light-independent protochlorophyllide reductase subunit B (Rubrivivax gelatinosus (strain NBRC 100245 / IL144)).